The following is a 529-amino-acid chain: Arginine--tRNA ligase (529 aa).

The short motif at 113-123 is the 'HIGH' region element; that stretch reads ANPTGPLHIGH.

The protein belongs to the class-I aminoacyl-tRNA synthetase family. As to quaternary structure, monomer.

The protein resides in the cytoplasm. It catalyses the reaction tRNA(Arg) + L-arginine + ATP = L-arginyl-tRNA(Arg) + AMP + diphosphate. The sequence is that of Arginine--tRNA ligase from Aliarcobacter butzleri (strain RM4018) (Arcobacter butzleri).